A 345-amino-acid polypeptide reads, in one-letter code: Phosphate acyltransferase (345 aa).

The protein belongs to the PlsX family. Homodimer. Probably interacts with PlsY.

Its subcellular location is the cytoplasm. The catalysed reaction is a fatty acyl-[ACP] + phosphate = an acyl phosphate + holo-[ACP]. It participates in lipid metabolism; phospholipid metabolism. In terms of biological role, catalyzes the reversible formation of acyl-phosphate (acyl-PO(4)) from acyl-[acyl-carrier-protein] (acyl-ACP). This enzyme utilizes acyl-ACP as fatty acyl donor, but not acyl-CoA. The chain is Phosphate acyltransferase from Wolbachia pipientis subsp. Culex pipiens (strain wPip).